A 410-amino-acid polypeptide reads, in one-letter code: Angiopoietin-related protein 4 (410 aa).

The N-terminal stretch at 1 to 23 (MRCAPTAGAALMLCAATAGLLSA) is a signal peptide. Residues 81–106 (KDPEGSAAPPRAQANLVNPGGGDASP) form a disordered region. The stretch at 107 to 155 (ETLRSLKTQLEAQNSRIQQLFQKVAQQQRHLEKQQLRIQNLQSQMDHLA) forms a coiled coil. Residue N184 is glycosylated (N-linked (GlcNAc...) asparagine). One can recognise a Fibrinogen C-terminal domain in the interval 186 to 408 (SRLHRLPRDC…ATTILVQPTA (223 aa)). 2 disulfide bridges follow: C195-C223 and C348-C361.

In terms of assembly, homooligomer; disulfide-linked via Cys residues in the N-terminal part of the protein. The homooligomer undergoes proteolytic processing to release the ANGPTL4 C-terminal chain, which circulates as a monomer. The homooligomer unprocessed form is able to interact with the extracellular matrix. Post-translationally, N-glycosylated. Forms disulfide-linked dimers and tetramers. In terms of processing, cleaved into a smaller N-terminal chain and a larger chain that contains the fibrinogen C-terminal domain; both cleaved and uncleaved forms are detected in the extracellular space. The cleaved form is not present within the cell.

The protein localises to the secreted. The protein resides in the extracellular space. It localises to the extracellular matrix. Functionally, mediates inactivation of the lipoprotein lipase LPL, and thereby plays a role in the regulation of triglyceride clearance from the blood serum and in lipid metabolism. May also play a role in regulating glucose homeostasis and insulin sensitivity. Inhibits proliferation, migration, and tubule formation of endothelial cells and reduces vascular leakage. Upon heterologous expression, inhibits the adhesion of endothelial cell to the extracellular matrix (ECM), and inhibits the reorganization of the actin cytoskeleton, formation of actin stress fibers and focal adhesions in endothelial cells that have adhered to ANGPTL4-containing ECM (in vitro). Depending on context, may modulate tumor-related angiogenesis. Its function is as follows. Mediates inactivation of the lipoprotein lipase LPL, and thereby plays an important role in the regulation of triglyceride clearance from the blood serum and in lipid metabolism. Has higher activity in LPL inactivation than the uncleaved protein. The polypeptide is Angiopoietin-related protein 4 (ANGPTL4) (Bos taurus (Bovine)).